Here is a 630-residue protein sequence, read N- to C-terminus: MLIENTNDRFGIVIDAGSSGSRIHVFKWQDTESLLHATNQDSQSILQSVPHIHQEKDWTFKLNPGLSSFEKKPQDAYKSHIKPLLDFAKNIIPESHWSSCPVFIQATAGMRLLPQDIQSSILDGLCQGLKHPAEFLVEDCSAQIQVIDGETEGLYGWLGLNYLYGHFNDYNPEVSDHFTFGFMDMGGASTQIAFAPHDSGEIARHRDDIATIFLRSVNGDLQKWDVFVSTWLGFGANQARRRYLAQLINTLPENTNDYENDDFSTRNLNDPCMPRGSSTDFEFKDTIFHIAGSGNYEQCTKSIYPLLLKNMPCDDEPCLFNGVHAPRIDFANDKFIGTSEYWYTANDVFKLGGEYNFDKFSKSLREFCNSNWTQILANSDKGVYNSIPENFLKDACFKGNWVLNILHEGFDMPRIDVDAENVNDRPLFQSVEKVEERELSWTLGRILLYASGSILAGNDDFMVGIAPSERRTKLTGKKFIPGKLLESDQLRKQSSSLSNKGFLMWFAIICCIFYLIFHRSHIIRRRFSGLYNITKDFKTGIRRRLKFLRRSDPFSRLEEGELGTDVDGFKDVYRMKSSSMFDLGKSSATMQREHEPQRTASQSANLAPSNLRPAFSMADFSKFKDSRLYD.

Topologically, residues methionine 1–lysine 500 are lumenal. Glutamate 152 serves as the catalytic Proton acceptor. A helical transmembrane segment spans residues glycine 501–phenylalanine 517. Residues histidine 518–aspartate 630 are Cytoplasmic-facing. Positions serine 586 to leucine 606 are disordered.

Belongs to the GDA1/CD39 NTPase family. Interacts with activator subunit VMA13 of vacuolar H(+)-ATPase. Interacts with CDC55; this interaction is disrupted by adenovirus E4orf4, which remains associated with both YND1 and CDC55. Ca(2+) is required as a cofactor. Requires Mg(2+) as cofactor. The cofactor is Mn(2+).

Its subcellular location is the golgi apparatus. The protein localises to the membrane. The catalysed reaction is a ribonucleoside 5'-triphosphate + 2 H2O = a ribonucleoside 5'-phosphate + 2 phosphate + 2 H(+). Its pathway is protein modification; protein glycosylation. With respect to regulation, activity is inhibited both by interaction with VMA13 and by V-ATPase acidification of the lumen. The activity of VMA13 is not required for YND1 inhibition. Functionally, catalyzes the hydrolysis of phosphoanhydride bonds of nucleoside tri- and di-phosphates. Has equal high activity toward ADP/ATP, GDP/GTP, and UDP/UTP and approximately 50% less toward CDP/CTP and thiamine pyrophosphate. Has no activity toward GMP. Required for Golgi glycosylation and cell wall integrity. Together with CDC55, required for adenovirus E4orf4 (early region 4 open reading frame 4) induced toxicity, the apyrase activity is not required for this function. Plays a role in sphingolipid synthesis. The sequence is that of Golgi apyrase (YND1) from Saccharomyces cerevisiae (strain ATCC 204508 / S288c) (Baker's yeast).